We begin with the raw amino-acid sequence, 433 residues long: MKRQALTLIPLLGAAAAQSGPYGQCGGNDWSGATTCVSGYVCVYQNEWYSQCVPGTATSSSTTLTTTTSATTRTTTTTTSTTSVPSSTNFPSASGLNFTIDGVTDYFAGSNSYWISMLTNDADVDLVLDHIASSGHKILRIWGFNDVNTEPSTGQVWFQKHQGGVSTINTGQYGLQRLDAVVSSAEKRGIKLIINFVNNWDDYGGMSAYLNAYGGSTKTDWYTSATIQAAYRTYIKAVIDRFIDSPAIFAWELANEPRCNGCDTSILYDWIADTSAYIKSLDPLHMVCIGDEGFGLDEGSDGSYPFSYNEGLDFAANLAIDTIDFGTFHLYPGSWGVSYDWGNLWAITHGAACATAGKPCLFEEYGAPSDHCAIEVPWQTTAVSSTGIAGDLFWQWGDTLSTGQTHNDGNTIYYGSDEYTCMVTEHMERIAAR.

An N-terminal signal peptide occupies residues 1–19; the sequence is MKRQALTLIPLLGAAAAQS. The CBM1 domain maps to 20–53; the sequence is GPYGQCGGNDWSGATTCVSGYVCVYQNEWYSQCV. The tract at residues 56–82 is thr-rich linker; it reads TATSSSTTLTTTTSATTRTTTTTTSTT. The catalytic stretch occupies residues 83 to 433; it reads SVPSSTNFPS…TEHMERIAAR (351 aa). Asn-97 carries an N-linked (GlcNAc...) asparagine glycan. 2 residues coordinate substrate: Trp-142 and Asn-255. The Proton donor role is filled by Glu-256. Tyr-331 is a substrate binding site. Catalysis depends on Glu-364, which acts as the Nucleophile. Trp-394 is a binding site for substrate.

The protein belongs to the glycosyl hydrolase 5 (cellulase A) family.

The protein localises to the secreted. It catalyses the reaction Random hydrolysis of (1-&gt;4)-beta-D-mannosidic linkages in mannans, galactomannans and glucomannans.. Its function is as follows. Endo-1,4-mannanase, a crucial enzyme for depolymerization of seed galactomannans and wood galactoglucomannans. The sequence is that of Probable mannan endo-1,4-beta-mannosidase F (manF) from Emericella nidulans (strain FGSC A4 / ATCC 38163 / CBS 112.46 / NRRL 194 / M139) (Aspergillus nidulans).